Here is a 349-residue protein sequence, read N- to C-terminus: Quinolinate synthase (349 aa).

The iminosuccinate site is built by His52 and Ser69. Cys114 is a [4Fe-4S] cluster binding site. Iminosuccinate contacts are provided by residues 140-142 and Ser157; that span reads YVN. Cys201 contacts [4Fe-4S] cluster. Iminosuccinate is bound by residues 227–229 and Thr255; that span reads HPE. Cys300 is a [4Fe-4S] cluster binding site.

It belongs to the quinolinate synthase family. Type 2 subfamily. The cofactor is [4Fe-4S] cluster.

It is found in the cytoplasm. It catalyses the reaction iminosuccinate + dihydroxyacetone phosphate = quinolinate + phosphate + 2 H2O + H(+). Its pathway is cofactor biosynthesis; NAD(+) biosynthesis; quinolinate from iminoaspartate: step 1/1. Its function is as follows. Catalyzes the condensation of iminoaspartate with dihydroxyacetone phosphate to form quinolinate. The protein is Quinolinate synthase of Mycobacterium bovis (strain BCG / Tokyo 172 / ATCC 35737 / TMC 1019).